The chain runs to 403 residues: Phosphoglycerate kinase (403 aa).

Residues 24–26, arginine 39, 62–65, arginine 121, and arginine 161 each bind substrate; these read DLN and HLGR. Residues lysine 211, glycine 299, glutamate 330, and 359–362 each bind ATP; that span reads GGDS.

The protein belongs to the phosphoglycerate kinase family. As to quaternary structure, monomer.

It localises to the cytoplasm. The catalysed reaction is (2R)-3-phosphoglycerate + ATP = (2R)-3-phospho-glyceroyl phosphate + ADP. The protein operates within carbohydrate degradation; glycolysis; pyruvate from D-glyceraldehyde 3-phosphate: step 2/5. The chain is Phosphoglycerate kinase from Corynebacterium jeikeium (strain K411).